A 427-amino-acid polypeptide reads, in one-letter code: 3-phosphoshikimate 1-carboxyvinyltransferase (427 aa).

Residues lysine 22, serine 23, and arginine 27 each contribute to the 3-phosphoshikimate site. Lysine 22 serves as a coordination point for phosphoenolpyruvate. Phosphoenolpyruvate-binding residues include glycine 93 and arginine 122. 4 residues coordinate 3-phosphoshikimate: serine 167, glutamine 169, aspartate 315, and lysine 342. Glutamine 169 provides a ligand contact to phosphoenolpyruvate. Aspartate 315 (proton acceptor) is an active-site residue. The phosphoenolpyruvate site is built by arginine 346 and arginine 387.

The protein belongs to the EPSP synthase family. As to quaternary structure, monomer.

Its subcellular location is the cytoplasm. The enzyme catalyses 3-phosphoshikimate + phosphoenolpyruvate = 5-O-(1-carboxyvinyl)-3-phosphoshikimate + phosphate. It participates in metabolic intermediate biosynthesis; chorismate biosynthesis; chorismate from D-erythrose 4-phosphate and phosphoenolpyruvate: step 6/7. Catalyzes the transfer of the enolpyruvyl moiety of phosphoenolpyruvate (PEP) to the 5-hydroxyl of shikimate-3-phosphate (S3P) to produce enolpyruvyl shikimate-3-phosphate and inorganic phosphate. The protein is 3-phosphoshikimate 1-carboxyvinyltransferase of Thermus thermophilus (strain ATCC BAA-163 / DSM 7039 / HB27).